Here is a 290-residue protein sequence, read N- to C-terminus: Light-independent protochlorophyllide reductase iron-sulfur ATP-binding protein (290 aa).

Residues 10–15 (GIGKST) and Lys39 contribute to the ATP site. Ser14 lines the Mg(2+) pocket. Cys95 and Cys129 together coordinate [4Fe-4S] cluster. Position 180-181 (180-181 (NR)) interacts with ATP.

Belongs to the NifH/BchL/ChlL family. As to quaternary structure, homodimer. Protochlorophyllide reductase is composed of three subunits; ChlL, ChlN and ChlB. It depends on [4Fe-4S] cluster as a cofactor.

It is found in the plastid. Its subcellular location is the chloroplast. The enzyme catalyses chlorophyllide a + oxidized 2[4Fe-4S]-[ferredoxin] + 2 ADP + 2 phosphate = protochlorophyllide a + reduced 2[4Fe-4S]-[ferredoxin] + 2 ATP + 2 H2O. The protein operates within porphyrin-containing compound metabolism; chlorophyll biosynthesis (light-independent). Component of the dark-operative protochlorophyllide reductase (DPOR) that uses Mg-ATP and reduced ferredoxin to reduce ring D of protochlorophyllide (Pchlide) to form chlorophyllide a (Chlide). This reaction is light-independent. The L component serves as a unique electron donor to the NB-component of the complex, and binds Mg-ATP. The sequence is that of Light-independent protochlorophyllide reductase iron-sulfur ATP-binding protein from Angiopteris evecta (Mule's foot fern).